Here is a 74-residue protein sequence, read N- to C-terminus: Alpha-elapitoxin-Aa2d (74 aa).

5 cysteine pairs are disulfide-bonded: C3/C21, C14/C42, C27/C31, C46/C57, and C58/C63.

Belongs to the three-finger toxin family. Long-chain subfamily. Type II alpha-neurotoxin sub-subfamily. As to expression, expressed by the venom gland.

The protein resides in the secreted. In terms of biological role, binds with high affinity to muscular (alpha-1/CHRNA1) and neuronal (alpha-7/CHRNA7) nicotinic acetylcholine receptor (nAChR) and inhibits acetylcholine from binding to the receptor, thereby impairing neuromuscular and neuronal transmission. The chain is Alpha-elapitoxin-Aa2d from Acanthophis antarcticus (Common death adder).